The chain runs to 442 residues: tRNA modification GTPase MnmE (442 aa).

(6S)-5-formyl-5,6,7,8-tetrahydrofolate contacts are provided by Arg21, Glu79, and Lys118. The region spanning Gly214–Asn367 is the TrmE-type G domain. K(+) is bound at residue Asn224. Residues Asn224 to Ser229, Ser243 to Thr249, and Asp268 to Gly271 contribute to the GTP site. Ser228 is a binding site for Mg(2+). The K(+) site is built by Ser243, Ile245, and Thr248. Thr249 provides a ligand contact to Mg(2+). (6S)-5-formyl-5,6,7,8-tetrahydrofolate is bound at residue Lys442.

Belongs to the TRAFAC class TrmE-Era-EngA-EngB-Septin-like GTPase superfamily. TrmE GTPase family. In terms of assembly, homodimer. Heterotetramer of two MnmE and two MnmG subunits. K(+) is required as a cofactor.

It is found in the cytoplasm. Exhibits a very high intrinsic GTPase hydrolysis rate. Involved in the addition of a carboxymethylaminomethyl (cmnm) group at the wobble position (U34) of certain tRNAs, forming tRNA-cmnm(5)s(2)U34. In Campylobacter jejuni (strain RM1221), this protein is tRNA modification GTPase MnmE.